A 1401-amino-acid chain; its full sequence is MSDLLGILKQQGQSEEFDAIKIALASPELIRSWSYGEVKKPETINYRTFKPERDGLFCAKTFGPVKDYECLCGKYKRLKHRGVICEKCGVELALAKVRRERMGHIELASPVAHIWFLKSLPSRIGLLLDMTLRDIERVLYFEAFVVVDPGMTELERGQLLNDEAYLDAMEQYGDEFDARMGAEAIRDLLRQIDLEDEIRNLREELPTTNSETKIKKITKRLKLLEAFYESGNKPEWMIMDVLPVLPPDLRPLVPLDGGRFATSDLNDLYRRVINRNNRLKRLLDLNAPDIIVRNEKRMLQESVDALLDNGRRGRAITGTNKRPLKSLADMIKGKQGRFRQNLLGKRVDYSGRSVIVVGPTLKLHQCGLPKKMALELFKPFIFSKLEFRGLATTIKAAKKMVEREESVVWDILDDVIREHPILLNRAPTLHRLGIQAFEPVLIEGKAIQLHPLVCTAYNADFDGDQMAVHVPLTLEAQLEARSLMMSTNNILSPASGEPIIVPSQDVVLGLYYLTREKVNALGEGKIYSSAQEAQNFYEAGHLDIHAKIKIRMPKEDGETGYHLVETTVGRAILAEILPKGMPFDYINRTMTKKVISKVIDSCYRKFGLKETVIFADQLMYTGFKYATRSGASIGIEDMEIPDDKASIIEHADNEVREIESQFRSGLVTNGERYNKVIDIWSRTNELVAKSMMSKIATEEVTDAKGNKVRQESFNPIFMMADSGARGSAAQIRQLAGMRGLMAAPDGSIIETPITANFREGLNVFQYFISTHGARKGLADTALKTANSGYLTRRLVDVAQDVVITEDDCGTDTGILMQPLIEGGDIVEPLHERVLGRVVASDVYIPTQTEPVVKAGTLLDEEWVEKLEKHGVDQVMVRSPITCQTRFGLCAKCYGRDLARGHLVNTGEAVGIIAAQSIGEPGTQLTMRTFHIGGAASRATAANNIQIKTKGVIRLHNIKTVTHENKNLVAVSRSGEVTIVDEFGRERERYKVPYGAVISAQDNSPVEAGQVIATWDPHTHPVISEVSGRLKFVDLIDGITMNRQTDELTGLSNIVIIDAKQRSAAGRDLRPMVKLVTDEGDDIYLAGTNVPAQYYLPVDAIVNFEDGSLVGIGDVIARIPQERSKTRDITGGLPRVADLFEARKPKDSAVMAEVSGLVNFGKETKGKRRLIINVSEDQCHEELIPKWRHISVFEGEHVERGEIIAEGALNPHDILRLLGVGALANYIVNEVQDVYRLQGVKINDKHIEVIVRQMLRKRVITFAGDSKFLVGEQVEESAMLQENDKLLAEGKQIARGTPILLGITKASLATESFISAASFQETTRVLTEAAVSGKVDELRGLKENVMVGRLIPAGTGYTYHQSRKAKRARAAAGGDSSATHTVTASDVEHALSEALNADNHEH.

4 residues coordinate Zn(2+): C70, C72, C85, and C88. Positions 460, 462, and 464 each coordinate Mg(2+). Zn(2+) is bound by residues C808, C882, C889, and C892.

Belongs to the RNA polymerase beta' chain family. The RNAP catalytic core consists of 2 alpha, 1 beta, 1 beta' and 1 omega subunit. When a sigma factor is associated with the core the holoenzyme is formed, which can initiate transcription. Requires Mg(2+) as cofactor. The cofactor is Zn(2+).

The catalysed reaction is RNA(n) + a ribonucleoside 5'-triphosphate = RNA(n+1) + diphosphate. DNA-dependent RNA polymerase catalyzes the transcription of DNA into RNA using the four ribonucleoside triphosphates as substrates. This chain is DNA-directed RNA polymerase subunit beta', found in Legionella pneumophila (strain Corby).